Here is a 273-residue protein sequence, read N- to C-terminus: Nitrogenase iron protein 5 (273 aa).

ATP is bound at residue 8–15; it reads GKGGIGKS. A [4Fe-4S] cluster-binding site is contributed by Cys-94. Arg-97 is subject to ADP-ribosylarginine; by dinitrogenase reductase ADP-ribosyltransferase. Cys-129 provides a ligand contact to [4Fe-4S] cluster.

This sequence belongs to the NifH/BchL/ChlL family. Homodimer. Requires [4Fe-4S] cluster as cofactor. The reversible ADP-ribosylation of Arg-97 inactivates the nitrogenase reductase and regulates nitrogenase activity.

It carries out the reaction N2 + 8 reduced [2Fe-2S]-[ferredoxin] + 16 ATP + 16 H2O = H2 + 8 oxidized [2Fe-2S]-[ferredoxin] + 2 NH4(+) + 16 ADP + 16 phosphate + 6 H(+). Its function is as follows. The key enzymatic reactions in nitrogen fixation are catalyzed by the nitrogenase complex, which has 2 components: the iron protein and the molybdenum-iron protein. In Clostridium pasteurianum, this protein is Nitrogenase iron protein 5 (nifH5).